The primary structure comprises 148 residues: 3-dehydroquinate dehydratase (148 aa).

Catalysis depends on Tyr-23, which acts as the Proton acceptor. Substrate-binding residues include Asn-75, His-81, and Asp-88. His-101 (proton donor) is an active-site residue. Substrate contacts are provided by residues 102-103 (LS) and Arg-112.

Belongs to the type-II 3-dehydroquinase family. In terms of assembly, homododecamer.

It carries out the reaction 3-dehydroquinate = 3-dehydroshikimate + H2O. It participates in metabolic intermediate biosynthesis; chorismate biosynthesis; chorismate from D-erythrose 4-phosphate and phosphoenolpyruvate: step 3/7. Functionally, catalyzes a trans-dehydration via an enolate intermediate. This is 3-dehydroquinate dehydratase from Xanthomonas campestris pv. campestris (strain 8004).